The chain runs to 157 residues: Tuberoinfundibular peptide of 39 residues (157 aa).

A signal peptide spans M1–A25. The propeptide occupies F26–Q116.

This sequence belongs to the parathyroid hormone family.

The protein resides in the secreted. Plays a role as a potent and selective agonist of pth2r resulting in adenyl cyclase activation and intracellular calcium level elevation. The polypeptide is Tuberoinfundibular peptide of 39 residues (Danio rerio (Zebrafish)).